Here is a 397-residue protein sequence, read N- to C-terminus: CCA-adding enzyme (397 aa).

Positions 8 and 11 each coordinate ATP. Positions 8 and 11 each coordinate CTP. Mg(2+) contacts are provided by E21 and D23. The ATP site is built by R91, R137, and R140. CTP-binding residues include R91, R137, and R140. The 112-residue stretch at 213–324 (NLDAAIATLK…LALFNGCDAW (112 aa)) folds into the HD domain.

The protein belongs to the tRNA nucleotidyltransferase/poly(A) polymerase family. Bacterial CCA-adding enzyme type 2 subfamily. It depends on Mg(2+) as a cofactor.

It catalyses the reaction a tRNA precursor + 2 CTP + ATP = a tRNA with a 3' CCA end + 3 diphosphate. It carries out the reaction a tRNA with a 3' CCA end + 2 CTP + ATP = a tRNA with a 3' CCACCA end + 3 diphosphate. Its function is as follows. Catalyzes the addition and repair of the essential 3'-terminal CCA sequence in tRNAs without using a nucleic acid template. Adds these three nucleotides in the order of C, C, and A to the tRNA nucleotide-73, using CTP and ATP as substrates and producing inorganic pyrophosphate. tRNA 3'-terminal CCA addition is required both for tRNA processing and repair. Also involved in tRNA surveillance by mediating tandem CCA addition to generate a CCACCA at the 3' terminus of unstable tRNAs. While stable tRNAs receive only 3'-terminal CCA, unstable tRNAs are marked with CCACCA and rapidly degraded. In Alteromonas mediterranea (strain DSM 17117 / CIP 110805 / LMG 28347 / Deep ecotype), this protein is CCA-adding enzyme.